The primary structure comprises 324 residues: Kelch domain-containing protein AF_2170 (324 aa).

2 Kelch repeats span residues 229–276 (YIFA…VGGE) and 277–323 (YIYI…NNGK).

This is Kelch domain-containing protein AF_2170 from Archaeoglobus fulgidus (strain ATCC 49558 / DSM 4304 / JCM 9628 / NBRC 100126 / VC-16).